Here is an 883-residue protein sequence, read N- to C-terminus: Valine--tRNA ligase (883 aa).

The 'HIGH' region signature appears at 46–56 (PNVTGKLHLGH). The short motif at 520-524 (KMSKS) is the 'KMSKS' region element. Residue lysine 523 participates in ATP binding. Residues 809 to 844 (LVDLLNVEEELARLEKELAKWQKELDMVGKKLSNER) are a coiled coil.

This sequence belongs to the class-I aminoacyl-tRNA synthetase family. ValS type 1 subfamily. In terms of assembly, monomer.

Its subcellular location is the cytoplasm. The enzyme catalyses tRNA(Val) + L-valine + ATP = L-valyl-tRNA(Val) + AMP + diphosphate. In terms of biological role, catalyzes the attachment of valine to tRNA(Val). As ValRS can inadvertently accommodate and process structurally similar amino acids such as threonine, to avoid such errors, it has a 'posttransfer' editing activity that hydrolyzes mischarged Thr-tRNA(Val) in a tRNA-dependent manner. This is Valine--tRNA ligase from Streptococcus pneumoniae (strain ATCC BAA-255 / R6).